Reading from the N-terminus, the 1409-residue chain is MNDKEKEICPRLIDFLVVVGKRNRTRGASQSSPDATTDTTVTYPEILRRYPTDDHKDFILPTDVTVFCQPEGCTTTSARLRKNARNDPQFFVFMLTEKDSAKVRYGICLNFYQSFDRRSTPKDEIKKVPDDAHHKKRDSHVSLTSLCFISHHPFVSIFHQVLLLLKRIIDSSNHRAAQRTGLKDVVWAILTGHYNEPIVPEVMKEIKEIETWILMLLSSPVPVPGKTKVQIEVMPMDLSQVFEFALPDHTRFTLIDFPLHIPFEILGIDMALRVLTAAMLEFKIVIQSRNYNAVSMCILSIVALLYPLEYMFPVIPLLPAYMPSAEQLLLAPTPFLIGVPSSFFHHRKIRELPSDVILVDLDTNCLQVPDDLYIPDLPEPDATHLKERLKNAINKMTTMTVDNETSVTDADFGIDIDSVDVACRVAMVQFFNSANVFGNFSEHTRTLRLYPRPVVSLQTDSFLRSRPQCTQLITDLCRTQAVEYFAECCLCPKNETFVRVQAGIESAEQVGDKPKWFSESLMPVHFMVYPNNSTLDSAIRVYNAEIDNDDYEDDSATSTENSNSIDDLVFDENQVTDAGGEVTKPLAEVNYIYKEPMTLELPQSESVVSIDSSLSSGRSSPDSSLSTSAVDSEADFARLADNLALKSNSQGAFSFDHGSDSEYESTPVSQRRKTIHNPGSDASDTPTSRGSIKSGLRMKGLTTLTDSGEKVLGPSLMNAINGYAEKSQSVFSQVINKTAPKAQALKERTMKPLANRIEQSQHIVRSKTQPNPTSQQTANQQSKNQQTVKEFCDQALVGQSVGMFSAPKLKRLMEDESLRELVCSKLNLGLEVKLSEDEYVKEVQLTKGQFKAYVKILKACLEGIEVSFNTPGCCGFASVFHVLEIAHTHYWAMGGGEVITPSSSAPSTMTTPSEHSNDILKESRPKLPASTIDLRTPTKPLGQNVTPTSTNNHEIAQSTRSPALPPPVPPREAPPIPKRNPPPLGAPPKVPEGARAPPPLPPRPKVKTTAVDETPQNLVPNNQPAQPSSPSFLADADEQTKPLLKPAPPTTLPVGKQEPCKVLPTPNEPVRHYIYQELILAVQHQIWQNLQFWENAFVDLVAQEREIVGMDQEPSEMIDRYSALNDSEKKRLELEEDRLLSTLLHNMTAYMIMCGTGQKALQQKVRRLLGKAHIGLVCSKEINKLLDELPSTQGNFIPLKPLGSRLVQKQSFTVCPGQSSDGQMMFMEVCDDAVVLRSITGAATERWWYERLVNITYSPKTKILCLWRRHDDKVHMHKFHTKKCRELYQCMKAAMERAAARGKVNVEGRALGGEFPVHDTETNQGGLLQVRCDGVAVIFAHNQIFIGLSNIKKCNTFGGNVFLLEEFDRKKGEIIQRRYFSQMADQICYAVLCVFSLAAAGHKKEEHSK.

Residues 26–230 (RGASQSSPDA…VPVPGKTKVQ (205 aa)) form the uDENN domain. Residues 251–390 (RFTLIDFPLH…DATHLKERLK (140 aa)) form the cDENN domain. A dDENN domain is found at 392 to 496 (AINKMTTMTV…ECCLCPKNET (105 aa)). 4 disordered regions span residues 654 to 701 (SFDH…MKGL), 761 to 784 (QHIVRSKTQPNPTSQQTANQQSKN), 902 to 1008 (SSSA…KVKT), and 1015 to 1034 (PQNLVPNNQPAQPSSPSFLA). Composition is skewed to polar residues over residues 680–691 (SDASDTPTSRGS) and 761–772 (QHIVRSKTQPNP). Composition is skewed to low complexity over residues 773–784 (TSQQTANQQSKN) and 902–913 (SSSAPSTMTTPS). A compositionally biased stretch (basic and acidic residues) spans 915–925 (HSNDILKESRP). The span at 941-961 (LGQNVTPTSTNNHEIAQSTRS) shows a compositional bias: polar residues. Positions 963–1003 (ALPPPVPPREAPPIPKRNPPPLGAPPKVPEGARAPPPLPPR) are enriched in pro residues. Positions 1020–1031 (PNNQPAQPSSPS) are enriched in low complexity. Residues 1109-1184 (GMDQEPSEMI…GLVCSKEINK (76 aa)) form the Death domain.

Belongs to the MADD family. In terms of assembly, interacts with cab-1. In terms of tissue distribution, expressed in nearly all neurons.

It is found in the cell membrane. It localises to the cytoplasm. Guanyl-nucleotide exchange factor that regulates small GTPases. Converts GDP-bound inactive form of rab-3 and cab-1 to the GTP-bound active forms. Regulator of presynaptic activity that interacts with rab-3 to regulate synaptic vesicle release. Is also a regulator of the cab-1 synaptic transmission pathway. Probably by converting rab-3 to its GTP-bound active form, plays a role in the recruitment of endophilin unc-57 to synaptic vesicles. Probably by activating rab-3 and thus regulating the trafficking of dense-core vesicles, plays a role in AVG neuron-mediated formation of the right axon tract of the ventral nerve cord. Regulates anterior body muscle contractions (aBOC) and the expulsion steps during the defecation motor program (DMP). Probably by regulating DMP, required for fatty acid uptake by intestinal cells. The sequence is that of MAP kinase-activating death domain protein (aex-3) from Caenorhabditis elegans.